Consider the following 678-residue polypeptide: Dihydroxyacetone phosphate acyltransferase (678 aa).

2 positions are modified to phosphoserine: Ser12 and Ser17. The HXXXXD motif motif lies at His161–Asp166. The residue at position 641 (Lys641) is an N6-acetyllysine. The Microbody targeting signal motif lies at Ala676 to Leu678.

It belongs to the GPAT/DAPAT family. As to quaternary structure, part of a heterotrimeric complex composed of GNPAT, AGPS and a modified form of GNPAT. In terms of tissue distribution, highly expressed in liver and testis. Lower levels in heart, brain, lung and kidney. Detected in spleen.

It is found in the peroxisome membrane. The enzyme catalyses dihydroxyacetone phosphate + an acyl-CoA = a 1-acylglycerone 3-phosphate + CoA. It carries out the reaction dihydroxyacetone phosphate + hexadecanoyl-CoA = 1-hexadecanoylglycerone 3-phosphate + CoA. The protein operates within membrane lipid metabolism; glycerophospholipid metabolism. Dihydroxyacetonephosphate acyltransferase catalyzing the first step in the biosynthesis of plasmalogens, a subset of phospholipids that differ from other glycerolipids by having an alkyl chain attached through a vinyl ether linkage at the sn-1 position of the glycerol backbone, and which unique physical properties have an impact on various aspects of cell signaling and membrane biology. The chain is Dihydroxyacetone phosphate acyltransferase from Mus musculus (Mouse).